A 658-amino-acid polypeptide reads, in one-letter code: DNA-binding protein Rfx5 (658 aa).

Residues 1 to 10 (MAEDKPDAKS) show a composition bias toward basic and acidic residues. A disordered region spans residues 1 to 28 (MAEDKPDAKSPKTGARPQGGADAGEPTT). At A2 the chain carries N-acetylalanine. Position 10 is a phosphoserine (S10). The segment at 24 to 89 (GEPTTLLQRL…PSLLSNEEYM (66 aa)) is N-terminal domain. Positions 61-65 (LYLYL) are leucine-rich region; critical for dimer formation and for interaction with RFXAP. A DNA-binding region (RFX-type winged-helix) is located at residues 91 to 167 (AYRWIRNHLE…YCYSGIRRKT (77 aa)). Residues 172-177 (PPLPGL) carry the PxLPxI/L motif; mediates interaction with RFXANK motif. Residue S184 is modified to Phosphoserine. Disordered stretches follow at residues 250–315 (LAEE…SSVP), 382–422 (AGPG…GLGA), 443–602 (VPPR…DKIP), and 624–658 (KGEADAATQGNKGLKGRVLQSSLTPEHKDPKATPP). Residues 277–309 (GPKKPERPAQPPKEQEARAGTDLPGRAERKKSV) show a composition bias toward basic and acidic residues. Gly residues-rich tracts occupy residues 382-398 (AGPGPGPGLGPRFGPGP) and 406-422 (PGLGAGLGPGLGPGLGA). Composition is skewed to basic and acidic residues over residues 465 to 476 (PRPHDKGIKRTA) and 489 to 498 (PVKEMKHETQ). Basic residues predominate over residues 506 to 516 (KRKRGRPRKKP). Basic and acidic residues predominate over residues 648–658 (PEHKDPKATPP).

It belongs to the RFX family. In terms of assembly, homodimer. The RFX heterotetrameric complex consists of 2 molecules of RFX5 and one each of RFXAP and RFX-B/RFXANK; with each subunit representing a separate complementation group. Interacts (via PxLPxI/L motif) with RFXANK (via ankyrin repeats); the interaction is direct. RFX forms cooperative DNA binding complexes with X2BP and CBF/NF-Y. RFX associates with CIITA to form an active transcriptional complex. Post-translationally, phosphorylated.

It is found in the nucleus. Activates transcription from class II MHC promoters. Recognizes X-boxes. Mediates cooperative binding between RFX and NF-Y. RFX binds the X1 box of MHC-II promoters. The sequence is that of DNA-binding protein Rfx5 (Rfx5) from Mus musculus (Mouse).